A 707-amino-acid polypeptide reads, in one-letter code: Potassium-transporting ATPase ATP-binding subunit (707 aa).

The segment covering 1-11 has biased composition (basic and acidic residues); the sequence is MNTDTQKHEDA. A disordered region spans residues 1-37; sequence MNTDTQKHEDAMSTTTPARAPHDDAPSGQQPGQGRVG. 4 helical membrane-spanning segments follow: residues 61 to 81, 89 to 109, 238 to 258, and 271 to 291; these read VMAK…TTAF, WFGW…NLAE, IALN…CATL, and MIVL…ALLS. Catalysis depends on Asp-326, which acts as the 4-aspartylphosphate intermediate. ATP contacts are provided by residues Asp-363, Glu-367, 397–404, and Lys-415; that span reads FTAQTRMS. Mg(2+)-binding residues include Asp-542 and Asp-546. Helical transmembrane passes span 612–632, 640–660, and 683–703; these read FAII…LNIM, AILS…PLAL, and LGGL…VSLI.

The protein belongs to the cation transport ATPase (P-type) (TC 3.A.3) family. Type IA subfamily. As to quaternary structure, the system is composed of three essential subunits: KdpA, KdpB and KdpC.

The protein resides in the cell membrane. It catalyses the reaction K(+)(out) + ATP + H2O = K(+)(in) + ADP + phosphate + H(+). In terms of biological role, part of the high-affinity ATP-driven potassium transport (or Kdp) system, which catalyzes the hydrolysis of ATP coupled with the electrogenic transport of potassium into the cytoplasm. This subunit is responsible for energy coupling to the transport system and for the release of the potassium ions to the cytoplasm. This is Potassium-transporting ATPase ATP-binding subunit from Streptomyces coelicolor (strain ATCC BAA-471 / A3(2) / M145).